The sequence spans 269 residues: GTP cyclohydrolase FolE2 (269 aa).

This sequence belongs to the GTP cyclohydrolase IV family.

The enzyme catalyses GTP + H2O = 7,8-dihydroneopterin 3'-triphosphate + formate + H(+). Its pathway is cofactor biosynthesis; 7,8-dihydroneopterin triphosphate biosynthesis; 7,8-dihydroneopterin triphosphate from GTP: step 1/1. Converts GTP to 7,8-dihydroneopterin triphosphate. The protein is GTP cyclohydrolase FolE2 of Burkholderia multivorans (strain ATCC 17616 / 249).